Here is a 325-residue protein sequence, read N- to C-terminus: MKLRVAVIYGGRTGEHEVSVRSAKSILAGLDCEKYETIEYFIDQNGKWSPGPILPEPGAHANIDVVFPVLHGTFGEDGTVQGLLELADLPYVGAGVLGSAVSMDKEMMKRVCKERMLPIVDYVTVTRQTPSIVDACRRLPFPMFVKPANLGSSVGISKAHDEQELEAAFSLAKQYDRKIIVERGIEGRELECSVLGNEAPMASLPCEILPSREFYDYEDKYLLDMARTQVPADLPGERTDEIRRLAVECYRAVECEGMARVDFFLEHGTNRLYINEINTIPGFTSISMYPKMWEHSGIPFCTLLDQLIEFALDRHRQKQVTRFAR.

An ATP-grasp domain is found at 109-309; sequence KRVCKERMLP…FCTLLDQLIE (201 aa). 136–191 is an ATP binding site; it reads CRRLPFPMFVKPANLGSSVGISKAHDEQELEAAFSLAKQYDRKIIVERGIEGRELE. 3 residues coordinate Mg(2+): Asp-262, Glu-276, and Asn-278.

This sequence belongs to the D-alanine--D-alanine ligase family. Requires Mg(2+) as cofactor. The cofactor is Mn(2+).

It is found in the cytoplasm. It catalyses the reaction 2 D-alanine + ATP = D-alanyl-D-alanine + ADP + phosphate + H(+). It functions in the pathway cell wall biogenesis; peptidoglycan biosynthesis. Its function is as follows. Cell wall formation. In Solibacter usitatus (strain Ellin6076), this protein is D-alanine--D-alanine ligase.